Here is a 171-residue protein sequence, read N- to C-terminus: 3-hydroxydecanoyl-[acyl-carrier-protein] dehydratase (171 aa).

The active site involves His-70.

It belongs to the thioester dehydratase family. FabA subfamily. As to quaternary structure, homodimer.

It localises to the cytoplasm. It catalyses the reaction a (3R)-hydroxyacyl-[ACP] = a (2E)-enoyl-[ACP] + H2O. The enzyme catalyses (3R)-hydroxydecanoyl-[ACP] = (2E)-decenoyl-[ACP] + H2O. It carries out the reaction (2E)-decenoyl-[ACP] = (3Z)-decenoyl-[ACP]. It functions in the pathway lipid metabolism; fatty acid biosynthesis. Its function is as follows. Necessary for the introduction of cis unsaturation into fatty acids. Catalyzes the dehydration of (3R)-3-hydroxydecanoyl-ACP to E-(2)-decenoyl-ACP and then its isomerization to Z-(3)-decenoyl-ACP. Can catalyze the dehydratase reaction for beta-hydroxyacyl-ACPs with saturated chain lengths up to 16:0, being most active on intermediate chain length. This Shewanella woodyi (strain ATCC 51908 / MS32) protein is 3-hydroxydecanoyl-[acyl-carrier-protein] dehydratase.